We begin with the raw amino-acid sequence, 208 residues long: Thymidylate kinase (208 aa).

Residue 10–17 (GLEGAGKT) coordinates ATP.

It belongs to the thymidylate kinase family.

The catalysed reaction is dTMP + ATP = dTDP + ADP. In terms of biological role, phosphorylation of dTMP to form dTDP in both de novo and salvage pathways of dTTP synthesis. The chain is Thymidylate kinase from Actinobacillus pleuropneumoniae serotype 5b (strain L20).